The chain runs to 489 residues: Cobyric acid synthase (489 aa).

A GATase cobBQ-type domain is found at R251 to A439. The active-site Nucleophile is C332. H431 is a catalytic residue.

Belongs to the CobB/CobQ family. CobQ subfamily.

It functions in the pathway cofactor biosynthesis; adenosylcobalamin biosynthesis. Its function is as follows. Catalyzes amidations at positions B, D, E, and G on adenosylcobyrinic A,C-diamide. NH(2) groups are provided by glutamine, and one molecule of ATP is hydrogenolyzed for each amidation. The chain is Cobyric acid synthase from Aromatoleum aromaticum (strain DSM 19018 / LMG 30748 / EbN1) (Azoarcus sp. (strain EbN1)).